A 78-amino-acid polypeptide reads, in one-letter code: Mu-conotoxin BuIIIB (78 aa).

The signal sequence occupies residues 1 to 22; sequence MMSKLGVLLTICLLLFPLFALP. Positions 23 to 51 are excised as a propeptide; sequence QDGDQPADRPAERMQDDISSEQNPLLEKR. The segment at 26 to 46 is disordered; that stretch reads DQPADRPAERMQDDISSEQNP. Basic and acidic residues predominate over residues 28 to 38; sequence PADRPAERMQD. 3 cysteine pairs are disulfide-bonded: cysteine 56-cysteine 68, cysteine 57-cysteine 74, and cysteine 64-cysteine 75. Cysteine 75 carries the cysteine amide modification.

Belongs to the conotoxin M superfamily. In terms of tissue distribution, expressed by the venom duct.

Its subcellular location is the secreted. Functionally, mu-conotoxins block voltage-gated sodium channels (Nav). This synthetic toxin potently blocks rNav1.4/SCN4A (Kd=0.34-3.6 nM), rNav1.2/SCN2A (Kd=13 nM), rNav1.3/SCN3A (Kd=200 nM), rNav1.1/SCN1A (Kd=360 nM), mNav1.6/SCN8A (IC(50)=1.8 uM), rNav1.5/SCN5A (IC(50)=9 uM), rNav1.6/SCN8A (IC(50)&gt;30 uM). It is noteworthy that the toxin is 50-fold more potent on mouse Nav1.6 than on rat Nav1.6. The block of SCN4A is very slowly reversible. In Conus bullatus (Bubble cone), this protein is Mu-conotoxin BuIIIB.